The sequence spans 100 residues: MTERFTGRLADVIRRPLITEKATRALEQNQYTFEVDHRAAKPDIKAAVEQLFDVKVTGISTMNPPRRSRRIGRFAGKRAQVKKAVVRLAEGNSIQLFPES.

The protein belongs to the universal ribosomal protein uL23 family. In terms of assembly, part of the 50S ribosomal subunit. Contacts protein L29, and trigger factor when it is bound to the ribosome.

In terms of biological role, one of the early assembly proteins it binds 23S rRNA. One of the proteins that surrounds the polypeptide exit tunnel on the outside of the ribosome. Forms the main docking site for trigger factor binding to the ribosome. The chain is Large ribosomal subunit protein uL23 from Synechococcus sp. (strain CC9311).